Here is a 341-residue protein sequence, read N- to C-terminus: Uroporphyrinogen decarboxylase (341 aa).

Substrate is bound by residues 25-29 (RQAGR), Phe44, Asp74, Tyr151, Ser206, and His318.

Belongs to the uroporphyrinogen decarboxylase family. In terms of assembly, homodimer.

The protein resides in the cytoplasm. It carries out the reaction uroporphyrinogen III + 4 H(+) = coproporphyrinogen III + 4 CO2. The protein operates within porphyrin-containing compound metabolism; protoporphyrin-IX biosynthesis; coproporphyrinogen-III from 5-aminolevulinate: step 4/4. Catalyzes the decarboxylation of four acetate groups of uroporphyrinogen-III to yield coproporphyrinogen-III. The chain is Uroporphyrinogen decarboxylase from Christiangramia forsetii (strain DSM 17595 / CGMCC 1.15422 / KT0803) (Gramella forsetii).